The primary structure comprises 718 residues: Methionine--tRNA ligase (718 aa).

The 'HIGH' region signature appears at 27–37; the sequence is PYANGQIHIGH. Cys158, Cys161, Cys171, and Cys174 together coordinate Zn(2+). The 'KMSKS' region motif lies at 348–352; it reads KMSKS. Lys351 provides a ligand contact to ATP. The tRNA-binding domain maps to 612-718; that stretch reads DFAKIDLRIA…SGAKPGMRVK (107 aa).

The protein belongs to the class-I aminoacyl-tRNA synthetase family. MetG type 1 subfamily. As to quaternary structure, homodimer. Zn(2+) is required as a cofactor.

The protein resides in the cytoplasm. The enzyme catalyses tRNA(Met) + L-methionine + ATP = L-methionyl-tRNA(Met) + AMP + diphosphate. Its function is as follows. Is required not only for elongation of protein synthesis but also for the initiation of all mRNA translation through initiator tRNA(fMet) aminoacylation. This is Methionine--tRNA ligase from Burkholderia thailandensis (strain ATCC 700388 / DSM 13276 / CCUG 48851 / CIP 106301 / E264).